The primary structure comprises 150 residues: Transcriptional repressor NrdR (150 aa).

A zinc finger lies at 3-34; that stretch reads CPFCNFEESKVVDSRATDDNTTIRRRRECLNC. The region spanning 49-139 is the ATP-cone domain; sequence VLVVKKDLAR…VYRQFKDINT (91 aa).

It belongs to the NrdR family. Zn(2+) is required as a cofactor.

Functionally, negatively regulates transcription of bacterial ribonucleotide reductase nrd genes and operons by binding to NrdR-boxes. This chain is Transcriptional repressor NrdR, found in Clostridium botulinum (strain Eklund 17B / Type B).